A 94-amino-acid chain; its full sequence is Fungal defensin scedosporisin-2 (94 aa).

Positions 1–25 (MKFSNISIAALFTILASTAMAAPAA) are cleaved as a signal peptide. The propeptide occupies 26–56 (DSPDSIVAREPAPVEETYEAPSGLEKRGFGC). Beta-D-GlcNAc-(1-&gt;4)-Mur2Ac(oyl-L-Ala-gamma-D-Glu-L-Lys-D-Ala-D-Ala)-di-trans,octa-cis-undecaprenyl diphosphate is bound by residues phenylalanine 54, glycine 55, and cysteine 56. Disulfide bonds link cysteine 56/cysteine 78, cysteine 63/cysteine 91, and cysteine 67/cysteine 93. The segment at 57 to 60 (PGSE) is interaction site with membrane interface. Beta-D-GlcNAc-(1-&gt;4)-Mur2Ac(oyl-L-Ala-gamma-D-Glu-L-Lys-D-Ala-D-Ala)-di-trans,octa-cis-undecaprenyl diphosphate is bound at residue histidine 66. Residues 83–90 (IPFVGRPR) form an interaction site with membrane interface region. Position 91 (cysteine 91) interacts with beta-D-GlcNAc-(1-&gt;4)-Mur2Ac(oyl-L-Ala-gamma-D-Glu-L-Lys-D-Ala-D-Ala)-di-trans,octa-cis-undecaprenyl diphosphate.

Belongs to the invertebrate defensin family.

The protein resides in the secreted. The protein localises to the target cell membrane. Its function is as follows. Antibacterial peptide potently active against Gram-positive bacteria. May act by selectively inhibiting peptidoglycan biosynthesis through complex formation with the cell wall precursor lipid II (1:1 molar ratio) thus inhibiting cell wall synthesis. Shows remarkably activity against resistant isolates such as methicillin-resistant Staphylococcus aureus (MRSA) and vancomycin-resistant Enterococci (VRE) at the concentration of micromolar level. Does not act by destroying the membrane integrity, which is consistent with its nonamphiphilic architecture. Acts more rapidly than vancomycin. Shows low hemolysis and cytotoxicity and high serum stability. In vivo, is as efficient as vancomycin to protect mouse peritonitis models from MRSA infections. This is Fungal defensin scedosporisin-2 from Pseudallescheria apiosperma (Scedosporium apiospermum).